The primary structure comprises 183 residues: MTVGLIGVVEKISALEVHIEVQGVVYGVQVSMRTASMLQTGQKARLKILQVIKEDAHLLYGFLEESEKILFERLLKINGVGGRIALAILSSFSPNEFENIIATKEVKRLQQVPGIGKKLADKIMVDLIGFFIQDETKPVHNEAFLALESLGFKSAEINPILKKLKPNLSVEEAIKEALQQLRS.

The segment at 1 to 63 (MTVGLIGVVE…EDAHLLYGFL (63 aa)) is domain I. The tract at residues 64-141 (EESEKILFER…IQDETKPVHN (78 aa)) is domain II. Position 141 (Asn141) is a region of interest, flexible linker. Positions 141–183 (NEAFLALESLGFKSAEINPILKKLKPNLSVEEAIKEALQQLRS) are domain III.

Belongs to the RuvA family. Homotetramer. Forms an RuvA(8)-RuvB(12)-Holliday junction (HJ) complex. HJ DNA is sandwiched between 2 RuvA tetramers; dsDNA enters through RuvA and exits via RuvB. An RuvB hexamer assembles on each DNA strand where it exits the tetramer. Each RuvB hexamer is contacted by two RuvA subunits (via domain III) on 2 adjacent RuvB subunits; this complex drives branch migration. In the full resolvosome a probable DNA-RuvA(4)-RuvB(12)-RuvC(2) complex forms which resolves the HJ.

The protein localises to the cytoplasm. Functionally, the RuvA-RuvB-RuvC complex processes Holliday junction (HJ) DNA during genetic recombination and DNA repair, while the RuvA-RuvB complex plays an important role in the rescue of blocked DNA replication forks via replication fork reversal (RFR). RuvA specifically binds to HJ cruciform DNA, conferring on it an open structure. The RuvB hexamer acts as an ATP-dependent pump, pulling dsDNA into and through the RuvAB complex. HJ branch migration allows RuvC to scan DNA until it finds its consensus sequence, where it cleaves and resolves the cruciform DNA. This chain is Holliday junction branch migration complex subunit RuvA, found in Helicobacter acinonychis (strain Sheeba).